A 66-amino-acid chain; its full sequence is Large ribosomal subunit protein bL35 (66 aa).

Composition is skewed to basic residues over residues 1-16 and 23-45; these read MPKF…RFKR and KRSH…RQLR. Residues 1-66 form a disordered region; it reads MPKFKTHRAS…RIRQMLSGLK (66 aa).

Belongs to the bacterial ribosomal protein bL35 family.

This is Large ribosomal subunit protein bL35 from Latilactobacillus sakei subsp. sakei (strain 23K) (Lactobacillus sakei subsp. sakei).